Here is a 136-residue protein sequence, read N- to C-terminus: MQPISPDGSLSPWEPGMFSLAVYAVLVAAFVAVQLFVAWWLGERKPGVEKARPYECGIIPTGSARLRYPVPFYLVAIFFLIFDMEGAYILTWAVAFEELGWAGWLQMSFFIGLLLVGLVYVWKKGGLDWRPSYGKK.

The next 3 membrane-spanning stretches (helical) occupy residues 20 to 40, 70 to 90, and 99 to 119; these read LAVY…VAWW, VPFY…AYIL, and LGWA…VGLV.

Belongs to the complex I subunit 3 family. As to quaternary structure, NDH-1 is composed of 14 different subunits. Subunits NuoA, H, J, K, L, M, N constitute the membrane sector of the complex.

Its subcellular location is the cell inner membrane. The catalysed reaction is a quinone + NADH + 5 H(+)(in) = a quinol + NAD(+) + 4 H(+)(out). NDH-1 shuttles electrons from NADH, via FMN and iron-sulfur (Fe-S) centers, to quinones in the respiratory chain. The immediate electron acceptor for the enzyme in this species is believed to be ubiquinone. Couples the redox reaction to proton translocation (for every two electrons transferred, four hydrogen ions are translocated across the cytoplasmic membrane), and thus conserves the redox energy in a proton gradient. The polypeptide is NADH-quinone oxidoreductase subunit A (Syntrophobacter fumaroxidans (strain DSM 10017 / MPOB)).